The following is a 2108-amino-acid chain: MEIKKERSFWIFCLIWSFCKGKEPVQIVQVSTVGRSECTTWGNFHFHTFDHVKFTFPGTCTYVFASHCNDSYQDFNIKIRRSDKNSHLIYFTVTTDGVILEVKETGITVNGNQIPLPFSLKSILIEDTCAYFQVTSKLGLTLKWNWADTLLLDLEETYKEKICGLCGNYDGNKKNDLILDGYKMHPRQFGNFHKVEDPSEKCPDVRPDDHTGRHPTEDDNRCSKYKKMCKKLLSRFGNCPKVVAFDDYVATCTEDMCNCVVNSSQSDLVSSCICSTLNQYSRDCVLSKGDPGEWRTKELCYQECPSNMEYMECGNSCADTCADPERSKICKAPCTDGCFCPPGTILDDLGGKKCVPRDSCPCMFQGKVYSSGGTYSTPCQNCTCKGGHWSCISLPCSGSCSIDGGFHIKTFDNKKFNFHGNCHYVLAKNTDDTFVVIGEIIQCGTSKTMTCLKNVLVTLGRTTIKICSCGSIYMNNFIVKLPVSKDGITIFRPSTFFIKILSSAGVQIRVQMKPVMQLSITVDHSYQNRTSGLCGNFNNIQTDDFRTATGAVEDSAAAFGNSWKTRASCFDVEDSFEDPCSNSVDKEKFAQHWCALLSNTSSTFAACHSVVDPSVYIKRCMYDTCNAEKSEVALCSVLSTYSRDCAAAGMTLKGWRQGICDPSEECPETMVYNYSVKYCNQSCRSLDEPDPLCKVQIAPMEGCGCPEGTYLNDEEECVTPDDCPCYYKGKIVQPGNSFQEDKLLCKCIQGRLDCIGETVLVKDCPAPMYYFNCSSAGPGAIGSECQKSCKTQDMHCYVTECVSGCMCPDGLVLDGSGGCIPKDQCPCVHGGHFYKPGETIRVDCNTCTCNKRQWNCTDNPCKGTCTVYGNGHYMSFDGEKFDFLGDCDYILAQDFCPNNMDAGTFRIVIQNNACGKSLSICSLKITLIFESSEIRLLEGRIQEIATDPGAEKNYKVDLRGGYIVIETTQGMSFMWDQKTTVVVHVTPSFQGKVCGLCGDFDGRSRNDFTTRGQSVEMSIQEFGNSWKITSTCSNINMTDLCADQPFKSALGQKHCSIIKSSVFEACHSKVNPIPYYESCVSDFCGCDSVGDCECFCTSVAAYARSCSTAGVCINWRTPAICPVFCDYYNPPDKHEWFYKPCGAPCLKTCRNPQGKCGNILYSLEGCYPECSPDKPYFDEERRECVSLPDCTSCNPEEKLCTEDSKDCLCCYNGKTYPLNETIYSQTEGTKCGNAFCGPNGMIIETFIPCSTLSVPAQEQLMQPVTSAPLLSTEATPCFCTDNGQLIQMGENVSLPMNISGHCAYSICNASCQIELIWAECKVVQTEALETCEPNSEACPPTAAPNATSLVPATALAPMSDCLGLIPPRKFNESWDFGNCQIATCLGEENNIKLSSITCPPQQLKLCVNGFPFMKHHDETGCCEVFECQCICSGWGNEHYVTFDGTYYHFKENCTYVLVELIQPSSEKFWIHIDNYYCGAADGAICSMSLLIFHSNSLVILTQAKEHGKGTNLVLFNDKKVVPDISKNGIRITSSGLYIIVEIPELEVYVSYSRLAFYIKLPFGKYYNNTMGLCGTCTNQKSDDARKRNGEVTDSFKEMALDWKAPVSTNRYCNPGISEPVKIENYQHCEPSELCKIIWNLTECHRVVPPQPYYEACVASRCSQQHPSTECQSMQTYAALCGLHGICVDWRGQTNGQCEATCARDQVYKPCGEAKRNTCFSREVIVDTLLSRNNTPVFVEGCYCPDGNILLNEHDGICVSVCGCTAQDGSVKKPREAWEHDCQYCTCDEETLNISCFPRPCAKSPPINCTKEGFVRKIKPRLDDPCCTETVCECDIKTCIINKTACDLGFQPVVAISEDGCCPIFSCIPKGVCVSEGVEFKPGAVVPKSSCEDCVCTDEQDAVTGTNRIQCVPVKCQTTCQQGFRYVEKEGQCCSQCQQVACVANFPFGSVTIEVGKSYKAPYDNCTQYTCTESGGQFSLTSTVKVCLPFEESNCVPGTVDVTSDGCCKTCIDLPHKCKRSMKEQYIVHKHCKSAAPVPVPFCEGTCSTYSVYSFENNEMEHKCICCHEKKSHVEKVELVCSEHKTLKFSYVHVDECGCVETKCPMRRT.

An N-terminal signal peptide occupies residues 1 to 21; that stretch reads MEIKKERSFWIFCLIWSFCKG. The region spanning 36–203 is the VWFD 1 domain; the sequence is SECTTWGNFH…KVEDPSEKCP (168 aa). 2 cysteine pairs are disulfide-bonded: Cys-38–Cys-166 and Cys-60–Cys-202. A disordered region spans residues 196 to 219; it reads EDPSEKCPDVRPDDHTGRHPTEDD. Positions 304-360 constitute a TIL 1 domain; sequence CPSNMEYMECGNSCADTCADPERSKICKAPCTDGCFCPPGTILDDLGGKKCVPRDSC. The N-linked (GlcNAc...) (complex) asparagine glycan is linked to Asn-381. The region spanning 398-570 is the VWFD 2 domain; the sequence is GSCSIDGGFH…NSWKTRASCF (173 aa). 3 disulfides stabilise this stretch: Cys-400–Cys-534, Cys-422–Cys-569, and Cys-443–Cys-451. Residues Asn-528, Asn-599, Asn-680, and Asn-772 are each glycosylated (N-linked (GlcNAc...) (complex) asparagine). Residues 666–723 enclose the TIL 2 domain; sequence CPETMVYNYSVKYCNQSCRSLDEPDPLCKVQIAPMEGCGCPEGTYLNDEEECVTPDDC. The TIL 3 domain maps to 782–825; that stretch reads GSECQKSCKTQDMHCYVTECVSGCMCPDGLVLDGSGGCIPKDQC. In terms of domain architecture, VWFC 1 spans 825–897; it reads CPCVHGGHFY…DYILAQDFCP (73 aa). Residue Asn-855 is glycosylated (N-linked (GlcNAc...) (complex) asparagine). The 171-residue stretch at 863–1033 folds into the VWFD 3 domain; that stretch reads GTCTVYGNGH…NSWKITSTCS (171 aa). 4 disulfide bridges follow: Cys-865–Cys-997, Cys-887–Cys-1032, Cys-896–Cys-994, and Cys-914–Cys-921. 4 N-linked (GlcNAc...) (complex) asparagine glycosylation sites follow: Asn-1036, Asn-1219, Asn-1371, and Asn-1452. In terms of domain architecture, VWFD 4 spans 1429–1613; sequence CICSGWGNEH…APVSTNRYCN (185 aa). 3 disulfide bridges follow: Cys-1431/Cys-1573, Cys-1453/Cys-1612, and Cys-1477/Cys-1485. 5 N-linked (GlcNAc...) (complex) asparagine glycosylation sites follow: Asn-1567, Asn-1639, Asn-1792, Asn-1807, and Asn-1841. The region spanning 1761 to 1832 is the VWFC 2 domain; that stretch reads CGCTAQDGSV…DPCCTETVCE (72 aa). The VWFC 3 domain maps to 1870–1937; it reads GVCVSEGVEF…KEGQCCSQCQ (68 aa). Residue Asn-1964 is glycosylated (N-linked (GlcNAc...) (complex) asparagine). 4 disulfide bridges follow: Cys-2010/Cys-2066, Cys-2031/Cys-2080, Cys-2042/Cys-2096, and Cys-2046/Cys-2098. The 95-residue stretch at 2010–2104 folds into the CTCK domain; the sequence is CIDLPHKCKR…ECGCVETKCP (95 aa).

In terms of assembly, homomultimer; disulfide-linked. The N- and C-terminus mediate their assembly into higher order structures to form filaments. The CTCK domains of two polypeptides associate in the endoplasmic reticulum to generate intermolecularly disulfide-bonded dimers. These dimers progress to the Golgi apparatus, which is a more acidic environment than the endoplasmic reticulum. Under acidic conditions, the N-termini form non-covalent intermolecular interactions that juxtapose assemblies from different CTCK-linked dimers to produce long, disulfide-linked polymers that remain highly compact until secretion. N-glycosylated. Complex glycosylation with bisecting N-acetylglucosamine. Contains mainly N-acetylglucosamine (3.1-8.5%), mannose (2.9-4.6%), a small amount of galactose (1.1-4.35) and sialic acid (0.3-1.3%). Most abundant glycan is composed of a GlcNAc(2)Man(3) core, a bisecting GlcNAc and another 3 GlcNAc antannae located on the mannoses of the core. Site Asn-1639 exists both in glycosylated and non-glycosylated forms.

It localises to the secreted. In terms of biological role, ovomucin, the glycoprotein responsible for the gel properties of egg white, is composed for 2 subunits, alpha-ovomucin/MUC5B and beta-ovomucin/MUC6. The chain is Mucin-5B (MUC5B) from Gallus gallus (Chicken).